A 399-amino-acid polypeptide reads, in one-letter code: Elongation factor Tu (399 aa).

The region spanning 10 to 209 (KPHVNIGTIG…DVDEYIPTPV (200 aa)) is the tr-type G domain. Positions 19–26 (GHVDHGKT) are G1. A GTP-binding site is contributed by 19–26 (GHVDHGKT). Thr26 is a Mg(2+) binding site. The interval 62–66 (GITIN) is G2. Residues 83–86 (DCPG) are G3. Residues 83–87 (DCPGH) and 138–141 (NKCD) each bind GTP. Residues 138–141 (NKCD) form a G4 region. The tract at residues 175–177 (SAY) is G5.

Belongs to the TRAFAC class translation factor GTPase superfamily. Classic translation factor GTPase family. EF-Tu/EF-1A subfamily. In terms of assembly, monomer.

The protein resides in the cytoplasm. The catalysed reaction is GTP + H2O = GDP + phosphate + H(+). Its function is as follows. GTP hydrolase that promotes the GTP-dependent binding of aminoacyl-tRNA to the A-site of ribosomes during protein biosynthesis. The chain is Elongation factor Tu from Bifidobacterium animalis subsp. lactis (strain AD011).